The chain runs to 131 residues: MAKEYSRTQRIGDQMQRELAQLIRREVKDPRVGLVTITAVEVSRDVGHAKIFITVMGQDSAEEIAQSIKVLNAAAGFLRMQLAREMKLRSVPQLHFHYDESVVRGAHLSALIERAVAEDSQHPSTPEDAKE.

Belongs to the RbfA family. Monomer. Binds 30S ribosomal subunits, but not 50S ribosomal subunits or 70S ribosomes.

It is found in the cytoplasm. Its function is as follows. One of several proteins that assist in the late maturation steps of the functional core of the 30S ribosomal subunit. Associates with free 30S ribosomal subunits (but not with 30S subunits that are part of 70S ribosomes or polysomes). Required for efficient processing of 16S rRNA. May interact with the 5'-terminal helix region of 16S rRNA. The chain is Ribosome-binding factor A from Pseudomonas fluorescens (strain SBW25).